A 117-amino-acid chain; its full sequence is G antigen 12J (117 aa).

Residues 1-117 are disordered; the sequence is MSWRGRSTYY…PEEGEKQSQC (117 aa). Composition is skewed to acidic residues over residues 32–45 and 87–96; these read FSDE…EEGE and ECEDGPDGQE. The segment covering 103–117 has biased composition (basic and acidic residues); the sequence is EEVKTPEEGEKQSQC.

The protein belongs to the GAGE family.

The protein is G antigen 12J (GAGE12J) of Homo sapiens (Human).